The primary structure comprises 149 residues: Protein K7 (149 aa).

This sequence belongs to the orthopoxvirus OPG044 family. In terms of assembly, interacts with DDX3; this interaction inhibits DDX3 and suppresses DDX3-mediated IFN-beta promoter induction. Interacts with TRAF6 and IRAK2; these interactions suppress TLR-dependent NF-KappaB activation.

It localises to the host cytoplasm. In terms of biological role, virulence factor that affects the acute immune response to infection. Bcl-2-like protein which, through its interaction with the DEAD box RNA helicase DDX3X/DDX3, prevents TBK1/IKKepsilon-mediated IRF3 activation. Contributes to virulence by binding to the host TRAF6 and IRAK2 and preventing host NF-kappa-B activation. This Cynomys gunnisoni (Gunnison's prairie dog) protein is Protein K7 (OPG044).